The following is a 251-amino-acid chain: Cell division protein ZapD (251 aa).

It belongs to the ZapD family. In terms of assembly, interacts with FtsZ.

The protein resides in the cytoplasm. Cell division factor that enhances FtsZ-ring assembly. Directly interacts with FtsZ and promotes bundling of FtsZ protofilaments, with a reduction in FtsZ GTPase activity. The chain is Cell division protein ZapD from Janthinobacterium sp. (strain Marseille) (Minibacterium massiliensis).